Consider the following 352-residue polypeptide: Quinolinate synthase (352 aa).

Iminosuccinate contacts are provided by H48 and S69. Residue C114 coordinates [4Fe-4S] cluster. Iminosuccinate is bound by residues Y140–N142 and S157. C201 is a binding site for [4Fe-4S] cluster. Residues H227–E229 and T244 contribute to the iminosuccinate site. C298 contacts [4Fe-4S] cluster.

The protein belongs to the quinolinate synthase family. Type 1 subfamily. The cofactor is [4Fe-4S] cluster.

Its subcellular location is the cytoplasm. It catalyses the reaction iminosuccinate + dihydroxyacetone phosphate = quinolinate + phosphate + 2 H2O + H(+). The protein operates within cofactor biosynthesis; NAD(+) biosynthesis; quinolinate from iminoaspartate: step 1/1. Catalyzes the condensation of iminoaspartate with dihydroxyacetone phosphate to form quinolinate. In Ectopseudomonas mendocina (strain ymp) (Pseudomonas mendocina), this protein is Quinolinate synthase.